The primary structure comprises 539 residues: Protein lin-14 (539 aa).

Disordered stretches follow at residues 162–230 (PTLP…SNHS) and 262–293 (ETAP…PRKP). Polar residues-rich tracts occupy residues 163–183 (TLPN…GTDD) and 193–214 (SVDS…NQNI). Residues 274 to 284 (NGTTNGTAKAG) show a composition bias toward low complexity. Residues 296-440 (DDIVKIVRNQ…CRRVRHAKKT (145 aa)) form an involved in sequence-specific DNA-binding region.

Cleaved by caspase ced-3 in vitro. In terms of tissue distribution, high levels in hypodermal, intestinal, body wall muscle, nerve ring, and ventral nerve cord cells of embryos and L1 animals.

It localises to the nucleus. In terms of biological role, heterochronic protein which controls the choice of stage specific cell fates. Involved in the temporal progression of vulval fate patterning, possibly by inhibiting lin-12. Acts as a transcription factor involved in the stage-specific repression of various genes, including insulin/insulin-like growth factor gene ins-33 and neuropeptide-encoding gene nlp-45. Binds to the consensus sequence 5'-[CT]GGA[AG]-3' in the regulatory elements of target genes. Plays a role in governing the developmental timing of male tail tip morphogenesis. Plays a role in controlling the timing of seam cell development during the larval stages. Plays a role in promoting survival at high temperatures in larvae. Involved in maintenance of the architecture of the ventral nerve cord, perhaps acting via modulating expression of the immunoglobulin domain gene zig-4. Functionally, may specify L2 and later cell fates, creating a temporal switch. May be involved in specifying L1 cell fates. The chain is Protein lin-14 from Caenorhabditis elegans.